The following is a 597-amino-acid chain: MAGYDVVVVGGGHAGLEAAWAAAALGVRVALVTVNPDRIGMMPCNPAVGGPGKSQLVAEVVALGGLMGRAADAAAIHTRVLNRSKGPAVQSLRVQVDRDLYALKAQEILAERPVEVLRGEVAALWVEGGRLLGVRTVDGRTLPAKAVVVAGGTFLSGVVWYGRKSRPAGRQGEPPARFLSQSLKAVGHTLRRFKTGTPPRIRADSVDFGRLEVVPPEVPPGSFTGNPGPHAARLPTWQTRTTERTHRLILENLHLSPLYAGDIQGIGPRYCPSIEDKVVRFADKESHLLFVEPDGLSTTEVYLQGFSSSLPPELQEEMVRSLPGFERAVIQRYAYAVEYDSLDPTELTRGLQSRFLPGLFSAGQVNGTSGYEEAAAQGLLAGLNAARFALGLPEVHLPRESGYIGVLVDDLVGRGTDEPYRMMTSRVELRLLCRADNADERLTPLAVAWGLRPREDLERVEAKYRRVAAELRRLEALRVEGVSGLQWLRRPENTYRALAERFPPPEPLSPEEAYQVEVRAKYAGYIERQERLREKMRDLEAFRIPEGMDFPKVPGLSREAAEKLSRHRPKSLAEAARIPGVRDSDLTALAVHLRRGA.

Residue 10-15 participates in FAD binding; it reads GGGHAG. 267 to 281 is an NAD(+) binding site; it reads GPRYCPSIEDKVVRF.

Belongs to the MnmG family. In terms of assembly, homodimer. Heterotetramer of two MnmE and two MnmG subunits. It depends on FAD as a cofactor.

It localises to the cytoplasm. Functionally, NAD-binding protein involved in the addition of a carboxymethylaminomethyl (cmnm) group at the wobble position (U34) of certain tRNAs, forming tRNA-cmnm(5)s(2)U34. In Thermus thermophilus (strain ATCC BAA-163 / DSM 7039 / HB27), this protein is tRNA uridine 5-carboxymethylaminomethyl modification enzyme MnmG.